The following is a 405-amino-acid chain: Phosphoglycerate kinase (405 aa).

Substrate is bound by residues 24-26 (DFN), R40, 63-66 (HLGR), R122, and R162. Residues K212, E331, and 361 to 364 (GGDS) contribute to the ATP site.

The protein belongs to the phosphoglycerate kinase family. As to quaternary structure, monomer.

Its subcellular location is the cytoplasm. The catalysed reaction is (2R)-3-phosphoglycerate + ATP = (2R)-3-phospho-glyceroyl phosphate + ADP. It functions in the pathway carbohydrate degradation; glycolysis; pyruvate from D-glyceraldehyde 3-phosphate: step 2/5. The sequence is that of Phosphoglycerate kinase (pgk) from Corynebacterium glutamicum (strain ATCC 13032 / DSM 20300 / JCM 1318 / BCRC 11384 / CCUG 27702 / LMG 3730 / NBRC 12168 / NCIMB 10025 / NRRL B-2784 / 534).